We begin with the raw amino-acid sequence, 451 residues long: UDP-N-acetylmuramoylalanine--D-glutamate ligase (451 aa).

119–125 (GSNGKTT) contacts ATP.

Belongs to the MurCDEF family.

Its subcellular location is the cytoplasm. The catalysed reaction is UDP-N-acetyl-alpha-D-muramoyl-L-alanine + D-glutamate + ATP = UDP-N-acetyl-alpha-D-muramoyl-L-alanyl-D-glutamate + ADP + phosphate + H(+). Its pathway is cell wall biogenesis; peptidoglycan biosynthesis. Functionally, cell wall formation. Catalyzes the addition of glutamate to the nucleotide precursor UDP-N-acetylmuramoyl-L-alanine (UMA). The polypeptide is UDP-N-acetylmuramoylalanine--D-glutamate ligase (Streptococcus agalactiae serotype III (strain NEM316)).